Reading from the N-terminus, the 151-residue chain is MMENTRIRVGAEAFSVGDEYTWLSQCDEDGAVVTFTGKVRNHNLGASVSALTLEHYPGMTEKALTEIIADARSRWSLQRVSVIHRVGPLFPGDEIVFVGVTSAHRSMAFEAAEFIMDYLKTRAPFWKREATVEGERWVESRDSDHIAAKRW.

Residues 38 to 40 (KVR), 104 to 105 (HR), lysine 120, and 127 to 129 (KRE) each bind substrate.

It belongs to the MoaE family. As to quaternary structure, heterotetramer of 2 MoaD subunits and 2 MoaE subunits. Also stable as homodimer. The enzyme changes between these two forms during catalysis.

The enzyme catalyses 2 [molybdopterin-synthase sulfur-carrier protein]-C-terminal-Gly-aminoethanethioate + cyclic pyranopterin phosphate + H2O = molybdopterin + 2 [molybdopterin-synthase sulfur-carrier protein]-C-terminal Gly-Gly + 2 H(+). Its pathway is cofactor biosynthesis; molybdopterin biosynthesis. Its function is as follows. Converts molybdopterin precursor Z into molybdopterin. This requires the incorporation of two sulfur atoms into precursor Z to generate a dithiolene group. The sulfur is provided by MoaD. The polypeptide is Molybdopterin synthase catalytic subunit (moaE) (Yersinia pestis).